The following is a 315-amino-acid chain: Ribosomal protein L11 methyltransferase (315 aa).

Positions 162, 183, 205, and 248 each coordinate S-adenosyl-L-methionine.

The protein belongs to the methyltransferase superfamily. PrmA family.

The protein resides in the cytoplasm. The catalysed reaction is L-lysyl-[protein] + 3 S-adenosyl-L-methionine = N(6),N(6),N(6)-trimethyl-L-lysyl-[protein] + 3 S-adenosyl-L-homocysteine + 3 H(+). Functionally, methylates ribosomal protein L11. In Oceanobacillus iheyensis (strain DSM 14371 / CIP 107618 / JCM 11309 / KCTC 3954 / HTE831), this protein is Ribosomal protein L11 methyltransferase.